Here is a 619-residue protein sequence, read N- to C-terminus: Glucokinase regulatory protein (619 aa).

2 SIS domains span residues 90-283 (VQEV…AESN) and 319-498 (TATS…LRGK). A keto-D-fructose 6-phosphate-binding site is contributed by 107–109 (CGT). Beta-D-fructose 1-phosphate contacts are provided by residues 109–110 (TS), Glu153, 179–181 (SCG), and Glu347. Keto-D-fructose 6-phosphate-binding positions include 179 to 183 (SCGLS) and Glu347. The tract at residues 462–464 (ILF) is essential for interaction with GCK. Lys513 contributes to the keto-D-fructose 6-phosphate binding site. Residue Lys513 coordinates beta-D-fructose 1-phosphate.

This sequence belongs to the GCKR family. Interacts (fructose 6-phosphate bound form) with gck.

It localises to the nucleus. The protein localises to the cytoplasm. Its subcellular location is the mitochondrion. Regulates glucokinase (gck) by forming an inactive complex with this enzyme. The affinity of gckr for gck is modulated by fructose metabolites: gckr with bound fructose 6-phosphate has increased affinity for gck, while gckr with bound fructose 1-phosphate has strongly decreased affinity for gck and does not inhibit gck activity. This Xenopus laevis (African clawed frog) protein is Glucokinase regulatory protein.